The sequence spans 154 residues: Myoglobin (154 aa).

The region spanning 2-148 (GLSDGEWQLV…FRHDMAAKYK (147 aa)) is the Globin domain. Residue Ser-4 is modified to Phosphoserine. A nitrite-binding site is contributed by His-65. His-65 contributes to the O2 binding site. Phosphothreonine is present on Thr-68. Heme b is bound at residue His-94.

It belongs to the globin family. In terms of assembly, monomeric.

It is found in the cytoplasm. The protein localises to the sarcoplasm. The enzyme catalyses Fe(III)-heme b-[protein] + nitric oxide + H2O = Fe(II)-heme b-[protein] + nitrite + 2 H(+). It catalyses the reaction H2O2 + AH2 = A + 2 H2O. In terms of biological role, monomeric heme protein which primary function is to store oxygen and facilitate its diffusion within muscle tissues. Reversibly binds oxygen through a pentacoordinated heme iron and enables its timely and efficient release as needed during periods of heightened demand. Depending on the oxidative conditions of tissues and cells, and in addition to its ability to bind oxygen, it also has a nitrite reductase activity whereby it regulates the production of bioactive nitric oxide. Under stress conditions, like hypoxia and anoxia, it also protects cells against reactive oxygen species thanks to its pseudoperoxidase activity. The sequence is that of Myoglobin (MB) from Osphranter rufus (Red kangaroo).